The chain runs to 292 residues: Hypersensitive-induced response protein 4 (292 aa).

Residue Gly2 is the site of N-myristoyl glycine attachment.

Self-interacts and forms heteromers. Interacts with NB-LRR class of R proteins before R proteins (e.g. RPS2 or RPM1) are activated by the effectors.

It is found in the cell membrane. The chain is Hypersensitive-induced response protein 4 (HIR4) from Arabidopsis thaliana (Mouse-ear cress).